A 618-amino-acid polypeptide reads, in one-letter code: Poly(A)-specific ribonuclease PARN-like (618 aa).

Ser-54, Gln-56, Asp-332, and Asn-418 together coordinate a divalent metal cation. The tract at residues 588–607 (ALESSDTDPDSDTKPSEIDW) is disordered.

The protein belongs to the CAF1 family. A divalent metal cation is required as a cofactor.

The protein resides in the nucleus. It is found in the cytoplasm. The enzyme catalyses Exonucleolytic cleavage of poly(A) to 5'-AMP.. Its function is as follows. 3'-exoribonuclease that has a preference for poly(A) tails of mRNAs, thereby efficiently degrading poly(A) tails. Exonucleolytic degradation of the poly(A) tail is often the first step in the decay of eukaryotic mRNAs. The protein is Poly(A)-specific ribonuclease PARN-like of Arabidopsis thaliana (Mouse-ear cress).